We begin with the raw amino-acid sequence, 73 residues long: Translational regulator CsrA (73 aa).

The segment at 54–73 (ENRAASDSPWSPNSLPQLPV) is disordered. Over residues 61-73 (SPWSPNSLPQLPV) the composition is skewed to polar residues.

This sequence belongs to the CsrA/RsmA family. Homodimer; the beta-strands of each monomer intercalate to form a hydrophobic core, while the alpha-helices form wings that extend away from the core.

It localises to the cytoplasm. Functionally, a translational regulator that binds mRNA to regulate translation initiation and/or mRNA stability. Usually binds in the 5'-UTR at or near the Shine-Dalgarno sequence preventing ribosome-binding, thus repressing translation. Its main target seems to be the major flagellin gene, while its function is anatagonized by FliW. The protein is Translational regulator CsrA of Treponema pallidum (strain Nichols).